A 1377-amino-acid polypeptide reads, in one-letter code: DNA-directed RNA polymerase subunit beta' (1377 aa).

Zn(2+) contacts are provided by C70, C72, C85, and C88. Residues D460, D462, and D464 each coordinate Mg(2+). 4 residues coordinate Zn(2+): C808, C882, C889, and C892.

Belongs to the RNA polymerase beta' chain family. The RNAP catalytic core consists of 2 alpha, 1 beta, 1 beta' and 1 omega subunit. When a sigma factor is associated with the core the holoenzyme is formed, which can initiate transcription. Mg(2+) is required as a cofactor. The cofactor is Zn(2+).

It catalyses the reaction RNA(n) + a ribonucleoside 5'-triphosphate = RNA(n+1) + diphosphate. In terms of biological role, DNA-dependent RNA polymerase catalyzes the transcription of DNA into RNA using the four ribonucleoside triphosphates as substrates. In Geotalea daltonii (strain DSM 22248 / JCM 15807 / FRC-32) (Geobacter daltonii), this protein is DNA-directed RNA polymerase subunit beta'.